The primary structure comprises 121 residues: Large ribosomal subunit protein bL12 (121 aa).

This sequence belongs to the bacterial ribosomal protein bL12 family. Homodimer. Part of the ribosomal stalk of the 50S ribosomal subunit. Forms a multimeric L10(L12)X complex, where L10 forms an elongated spine to which 2 to 4 L12 dimers bind in a sequential fashion. Binds GTP-bound translation factors.

In terms of biological role, forms part of the ribosomal stalk which helps the ribosome interact with GTP-bound translation factors. Is thus essential for accurate translation. The protein is Large ribosomal subunit protein bL12 of Pectobacterium carotovorum subsp. carotovorum (strain PC1).